A 328-amino-acid chain; its full sequence is Alanine racemase (328 aa).

K33 acts as the Proton acceptor; specific for D-alanine in catalysis. K33 carries the post-translational modification N6-(pyridoxal phosphate)lysine. A substrate-binding site is contributed by R118. Residue Y237 is the Proton acceptor; specific for L-alanine of the active site. M283 is a binding site for substrate.

Belongs to the alanine racemase family. Requires pyridoxal 5'-phosphate as cofactor.

It catalyses the reaction L-alanine = D-alanine. It participates in amino-acid biosynthesis; D-alanine biosynthesis; D-alanine from L-alanine: step 1/1. In terms of biological role, catalyzes the interconversion of L-alanine and D-alanine. May also act on other amino acids. The sequence is that of Alanine racemase (alr) from Campylobacter jejuni subsp. jejuni serotype O:2 (strain ATCC 700819 / NCTC 11168).